Here is a 144-residue protein sequence, read N- to C-terminus: Ferredoxin-thioredoxin reductase catalytic chain, chloroplastic (144 aa).

Residues 1 to 31 (MTTQASTFAVAVPSVATPFRRHRNPFVVRAQ) constitute a chloroplast transit peptide. Cysteine 83 provides a ligand contact to [4Fe-4S] cluster. Cysteine 85 functions as the Nucleophile in the catalytic mechanism. Cysteines 85 and 115 form a disulfide. [4Fe-4S] cluster-binding residues include cysteine 102, cysteine 104, and cysteine 113.

This sequence belongs to the ferredoxin thioredoxin reductase beta subunit family. As to quaternary structure, heterodimer of subunit A (variable subunit) and subunit B (catalytic subunit). Heterodimeric FTR forms a complex with ferredoxin and thioredoxin. [4Fe-4S] cluster serves as cofactor.

Its subcellular location is the plastid. The protein localises to the chloroplast. The catalysed reaction is [thioredoxin]-disulfide + 2 reduced [2Fe-2S]-[ferredoxin] + 2 H(+) = [thioredoxin]-dithiol + 2 oxidized [2Fe-2S]-[ferredoxin]. Its function is as follows. Catalytic subunit of the ferredoxin-thioredoxin reductase (FTR), which catalyzes the two-electron reduction of thioredoxins by the electrons provided by reduced ferredoxin. This Glycine max (Soybean) protein is Ferredoxin-thioredoxin reductase catalytic chain, chloroplastic (FTRC).